We begin with the raw amino-acid sequence, 405 residues long: Serine-type anaerobic sulfatase-maturating enzyme (405 aa).

Residues 18–249 (PRSPVPFHIL…QWRKRCDRGR (232 aa)) enclose the Radical SAM core domain. Positions 35 and 39 each coordinate [4Fe-4S] cluster. Tyr41 contacts S-adenosyl-L-methionine. [4Fe-4S] cluster is bound at residue Cys42. Residues Gly84, Ser140, and Arg152 each contribute to the S-adenosyl-L-methionine site. [4Fe-4S] cluster is bound by residues Cys270, Cys276, and Cys291. Asp292 acts as the Proton acceptor in catalysis. [4Fe-4S] cluster is bound by residues Cys331, Cys334, Cys340, Cys344, and Cys357.

The protein belongs to the radical SAM superfamily. Anaerobic sulfatase-maturating enzyme family. As to quaternary structure, monomer. Interacts with AtsA prior to its export to the periplasm. The cofactor is [4Fe-4S] cluster.

The protein resides in the cytoplasm. It catalyses the reaction L-seryl-[sulfatase] + S-adenosyl-L-methionine = 3-oxo-L-alanyl-[sulfatase] + 5'-deoxyadenosine + L-methionine + H(+). Its pathway is protein modification; sulfatase oxidation. Involved in 'Ser-type' sulfatase maturation under anaerobic conditions. Catalyzes the post-translational modification of serine ('Ser-72' in the arylsulfatase AtsA) into 3-oxoalanine (also known as C(alpha)-formylglycine (FGly)), by a free radical chemical mechanism initiated via the reductive cleavage of S-adenosyl-L-methionine (SAM). In Klebsiella aerogenes (Enterobacter aerogenes), this protein is Serine-type anaerobic sulfatase-maturating enzyme.